The following is a 177-amino-acid chain: Myosin regulatory light chain 2 (177 aa).

The segment covering 1–16 (MSRKSGSRSSSKRSKK) has biased composition (basic residues). The tract at residues 1-24 (MSRKSGSRSSSKRSKKSGGGSNVF) is disordered. IgE-binding epitope regions lie at residues 13–30 (RSKKSGGGSNVFDMFTQR), 22–48 (NVFDMFTQRQVAEFKEGFQLMDRDKDG), 49–66 (VIGKTDLRGTFDEIGRIA), 58–90 (TFDEIGRIATDQELDEMLADAPAPINFTMLLNM), 79–99 (PAPINFTMLLNMFAERQTGES), and 118–141 (NIDCDTFRHALMTWGDKFSSQEAD). Positions 30 to 65 (RQVAEFKEGFQLMDRDKDGVIGKTDLRGTFDEIGRI) constitute an EF-hand 1 domain. Ca(2+) contacts are provided by Asp-43, Asp-45, Asp-47, and Asp-54. One can recognise an EF-hand 2 domain in the interval 135-170 (FSSQEADDALDQMDIDDGGKIDVQGVIQMLTAGGGD).

In terms of assembly, myosin is a hexamer of 2 heavy chains and 4 light chains. In terms of tissue distribution, expressed in tail muscle (at protein level).

The chain is Myosin regulatory light chain 2 from Penaeus vannamei (Whiteleg shrimp).